The following is a 441-amino-acid chain: MGRKKIQITRIMDERNRQVTFTKRKFGLMKKAYELSVLCDCEIALIIFNSTNKLFQYASTDMDKVLLKYTEYNEPHESRTNSDIVETLRKKGLNGCDSPDPDADDSVGHSPESEDKYRKINEDIDLMISRQRLCAVPPPNFEMPVSIPVSSHNSLVYSNPVSSLGNPNLLPLAHPSLQRNSMSPGVTHRPPSAGNTGGLMGGDLTSGAGTSAGNGYGNPRNSPGLLVSPGNLNKNMQAKSPPPMNLGMNNRKPDLRVLIPPGSKNTMPSVSEDVDLLLNQRINNSQSAQSLATPVVSVATPTLPGQGMGGYPSAISTTYGTEYSLSSADLSSLSGFNTASALHLGSVTGWQQQHLHSMPPSALSQLGDRTTTPSRYPQHTRHEAGRSPVDSLSSCSSSYDGSDREDHRNEFHSPIGLTRPSPDERESPSVKRMRLSEGWAT.

One can recognise an MADS-box domain in the interval 1 to 61; it reads MGRKKIQITR…NKLFQYASTD (61 aa). N6-acetyllysine is present on K4. The mef2-type DNA-binding region spans 58–86; sequence ASTDMDKVLLKYTEYNEPHESRTNSDIVE. S59 is modified (phosphoserine; by CK2). The tract at residues 91 to 116 is disordered; the sequence is KGLNGCDSPDPDADDSVGHSPESEDK. Residues S98, S106, and S110 each carry the phosphoserine modification. N6-acetyllysine occurs at positions 116 and 119. The tract at residues 180–224 is disordered; the sequence is NSMSPGVTHRPPSAGNTGGLMGGDLTSGAGTSAGNGYGNPRNSPG. Phosphoserine is present on residues S222 and S228. N6-acetyllysine occurs at positions 234 and 239. At S240 the chain carries Phosphoserine. 2 positions are modified to N6-acetyllysine: K252 and K264. The segment at 271-278 is beta domain; it reads SEDVDLLL. A phosphothreonine; by MAPK7 and MAPK14 mark is found at T293 and T300. A disordered region spans residues 353 to 441; it reads QHLHSMPPSA…RMRLSEGWAT (89 aa). Positions 362–377 are enriched in polar residues; sequence ALSQLGDRTTTPSRYP. Residue S387 is modified to Phosphoserine; by MAPK7. Residues 387–400 are compositionally biased toward low complexity; it reads SPVDSLSSCSSSYD. Residues 401–411 show a composition bias toward basic and acidic residues; sequence GSDREDHRNEF. Residue S413 is modified to Phosphoserine.

Belongs to the MEF2 family. As to quaternary structure, forms a complex with class II HDACs in undifferentiating cells. On myogenic differentiation, HDACs are released into the cytoplasm allowing MEF2s to interact with other proteins for activation. Interacts with EP300 in differentiating cells; the interaction acetylates MEF2C leading to increased DNA binding and activation. Interacts with HDAC7 and CARM1. Interacts with HDAC4, HDAC7 and HDAC9; the interaction with HDACs represses transcriptional activity. Interacts with LPIN1. Interacts with MYOCD. Interacts with AKAP13. Interacts with FOXK1; the interaction inhibits MEF2C transactivation activity. Interacts (via N-terminus) with HABP4; this interaction decreases DNA-binding activity of MEF2C in myocardial cells in response to mechanical stress. Interacts with JPH2; interaction specifically takes place with the Junctophilin-2 N-terminal fragment cleavage product of JPH2. Interacts (via MADS box) with SOX18. Interacts with PHF7; the interaction promotes MEF2C binding to its transcription targets. Phosphorylation on Ser-59 enhances DNA binding activity. Post-translationally, acetylated by p300 on several sites in diffentiating myocytes. Acetylation on Lys-4 increases DNA binding and transactivation. In terms of processing, proteolytically cleaved in cerebellar granule neurons, probably by caspase 7, following neurotoxicity.

The protein resides in the nucleus. Its subcellular location is the cytoplasm. It localises to the sarcoplasm. Its function is as follows. Transcription activator which binds specifically to the MEF2 element present in the regulatory regions of many muscle-specific genes. Controls cardiac morphogenesis and myogenesis, and is also involved in vascular development. Enhances transcriptional activation mediated by SOX18. Plays an essential role in hippocampal-dependent learning and memory by suppressing the number of excitatory synapses and thus regulating basal and evoked synaptic transmission. Crucial for normal neuronal development, distribution, and electrical activity in the neocortex. Necessary for proper development of megakaryocytes and platelets and for bone marrow B-lymphopoiesis. Required for B-cell survival and proliferation in response to BCR stimulation, efficient IgG1 antibody responses to T-cell-dependent antigens and for normal induction of germinal center B-cells. May also be involved in neurogenesis and in the development of cortical architecture. This Bos taurus (Bovine) protein is Myocyte-specific enhancer factor 2C.